A 2912-amino-acid chain; its full sequence is Fibrillin-2 (2912 aa).

Residues 1 to 28 (MGRRRRLCLQLYFLWLGCVVLWAQGTAG) form the signal peptide. The segment at 27-52 (AGQPQPPPPKPPRPQPPPQQVRSATA) is disordered. Positions 29-77 (QPQPPPPKPPRPQPPPQQVRSATAGSEGGFLAPEYREEGAAVASRVRRR) are excised as a propeptide. A compositionally biased stretch (pro residues) spans 30–45 (PQPPPPKPPRPQPPPQ). 3 consecutive EGF-like domains span residues 111 to 142 (IVPI…STCG), 145 to 176 (SIQQ…TYCG), and 176 to 208 (GQPV…PQCE). 9 disulfide bridges follow: Cys-115–Cys-124, Cys-119–Cys-130, Cys-132–Cys-141, Cys-149–Cys-159, Cys-153–Cys-164, Cys-166–Cys-175, Cys-180–Cys-190, Cys-184–Cys-196, and Cys-198–Cys-207. Positions 149-359 (CSVRCMNGGT…VTSTDGSRCI (211 aa)) are interaction with MFAP4. One can recognise a TB 1 domain in the interval 214 to 266 (GPCFTQVNNQMCQGQLTGIVCTKTLCCATIGRAWGHPCEMCPAQPQPCRRGFI). The EGF-like 4; calcium-binding domain occupies 276-317 (DVDECQAIPGICQGGNCINTVGSFECRCPAGHKQSETTQKCE). Disulfide bonds link Cys-280-Cys-292, Cys-287-Cys-301, Cys-303-Cys-316, Cys-322-Cys-334, Cys-329-Cys-343, and Cys-345-Cys-358. Ser-298 carries O-linked (Glc) serine glycosylation. One can recognise an EGF-like 5; calcium-binding domain in the interval 318–359 (DIDECSIIPGICETGECSNTVGSYFCVCPRGYVTSTDGSRCI). Ser-340 is a glycosylation site (O-linked (Glc) serine). Positions 364–417 (GMCFSGLVNGRCAQELPGRMTKMQCCCEPGRCWGIGTIPEACPVRGSEEYRRLC) constitute a TB 2 domain. Asn-492 carries N-linked (GlcNAc...) asparagine glycosylation. The 41-residue stretch at 494–534 (TIDICKHHANLCLNGRCIPTVSSYRCECNMGYKQDANGDCI) folds into the EGF-like 6 domain. 15 disulfides stabilise this stretch: Cys-498–Cys-510, Cys-505–Cys-519, Cys-521–Cys-533, Cys-539–Cys-549, Cys-544–Cys-558, Cys-560–Cys-573, Cys-579–Cys-591, Cys-586–Cys-600, Cys-602–Cys-615, Cys-621–Cys-632, Cys-627–Cys-641, Cys-643–Cys-656, Cys-662–Cys-673, Cys-668–Cys-682, and Cys-684–Cys-697. Residue Ser-516 is glycosylated (O-linked (Glc) serine). Positions 535 to 574 (DVDECTSNPCTNGDCVNTPGSYYCKCHAGFQRTPTKQACI) constitute an EGF-like 7; calcium-binding domain. Ser-555 carries an O-linked (Glc) serine glycan. In terms of domain architecture, EGF-like 8; calcium-binding spans 575–616 (DIDECIQNGVLCKNGRCVNTDGSFQCICNAGFELTTDGKNCV). A glycan (O-linked (Glc) serine) is linked at Ser-597. The 41-residue stretch at 617 to 657 (DHDECTTTNMCLNGMCINEDGSFKCICKPGFVLAPNGRYCT) folds into the EGF-like 9; calcium-binding domain. O-linked (Glc) serine glycosylation is present at Ser-638. The 41-residue stretch at 658-698 (DVDECQTPGICMNGHCINSEGSFRCDCPPGLAVGMDGRVCV) folds into the EGF-like 10; calcium-binding domain. Residue Ser-679 is glycosylated (O-linked (Glc) serine). The region spanning 704–756 (STCYGGIKKGVCVRPFPGAVTKSECCCANPDYGFGEPCQPCPAKNSAEFHGLC) is the TB 3 domain. The 42-residue stretch at 768–809 (DINECALDPDICANGICENLRGSYRCNCNSGYEPDASGRNCI) folds into the EGF-like 11; calcium-binding domain. Cystine bridges form between Cys-772-Cys-784, Cys-779-Cys-793, Cys-795-Cys-808, Cys-814-Cys-826, Cys-821-Cys-835, Cys-837-Cys-850, Cys-856-Cys-866, Cys-861-Cys-875, and Cys-877-Cys-890. Positions 810–851 (DIDECLVNRLLCDNGLCRNTPGSYSCTCPPGYVFRTETETCE) constitute an EGF-like 12; calcium-binding domain. Residue Ser-832 is glycosylated (O-linked (Glc) serine). In terms of domain architecture, EGF-like 13; calcium-binding spans 852–891 (DINECESNPCVNGACRNNLGSFNCECSPGSKLSSTGLICI). The O-linked (Glc) serine glycan is linked to Ser-872. In terms of domain architecture, TB 4 spans 896–947 (GTCWLNIQDSRCEVNINGATLKSECCATLGAAWGSPCERCELDTACPRGLAR). The region spanning 955–996 (DVNECEVFPGVCPNGRCVNSKGSFHCECPEGLTLDGTGRVCL) is the EGF-like 14; calcium-binding domain. 3 cysteine pairs are disulfide-bonded: Cys-959-Cys-971, Cys-966-Cys-980, and Cys-982-Cys-995. O-linked (Glc) serine glycosylation is present at Ser-977. Positions 1001–1052 (EQCYLKWDEDECIHPVPGKFRMDACCCAVGAAWGTECEECPKPGTKEYETLC) constitute a TB 5 domain. The EGF-like 15; calcium-binding domain maps to 1073-1114 (DINECKAFPGMCTYGKCRNTIGSFKCRCNSGFALDMEERNCT). Disulfide bonds link Cys-1077–Cys-1089, Cys-1084–Cys-1098, Cys-1100–Cys-1113, Cys-1119–Cys-1131, Cys-1126–Cys-1140, Cys-1142–Cys-1156, Cys-1162–Cys-1174, Cys-1169–Cys-1183, Cys-1185–Cys-1198, Cys-1204–Cys-1216, Cys-1211–Cys-1225, Cys-1227–Cys-1240, Cys-1246–Cys-1257, Cys-1253–Cys-1266, Cys-1268–Cys-1281, Cys-1287–Cys-1299, Cys-1294–Cys-1308, Cys-1310–Cys-1323, Cys-1329–Cys-1341, Cys-1336–Cys-1350, Cys-1352–Cys-1365, Cys-1371–Cys-1384, Cys-1378–Cys-1393, Cys-1395–Cys-1406, Cys-1412–Cys-1425, Cys-1419–Cys-1434, Cys-1436–Cys-1447, Cys-1453–Cys-1465, Cys-1460–Cys-1474, Cys-1476–Cys-1489, Cys-1495–Cys-1506, Cys-1501–Cys-1515, Cys-1517–Cys-1530, Cys-1536–Cys-1547, Cys-1542–Cys-1556, and Cys-1558–Cys-1571. Ser-1095 carries O-linked (Glc) serine glycosylation. Residue Asn-1112 is glycosylated (N-linked (GlcNAc...) asparagine). Residues 1115–1157 (DIDECRISPDLCGSGICVNTPGSFECECFEGYESGFMMMKNCM) form the EGF-like 16; calcium-binding domain. In terms of domain architecture, EGF-like 17; calcium-binding spans 1158 to 1199 (DIDECERNPLLCRGGTCVNTEGSFQCDCPLGHELSPSREDCV). O-linked (Glc) serine glycosylation occurs at Ser-1180. Positions 1200 to 1241 (DINECSLSDNLCRNGKCVNMIGTYQCSCNPGYQATPDRQGCT) constitute an EGF-like 18; calcium-binding domain. An O-linked (Glc) threonine glycan is attached at Thr-1222. An EGF-like 19; calcium-binding domain is found at 1242–1282 (DIDECMIMNGGCDTQCTNSEGSYECSCSEGYALMPDGRSCA). O-linked (Glc) serine glycosylation occurs at Ser-1263. Residues 1283–1324 (DIDECENNPDICDGGQCTNIPGEYRCLCYDGFMASMDMKTCI) enclose the EGF-like 20; calcium-binding domain. Positions 1325–1366 (DVNECDLNSNICMFGECENTKGSFICHCQLGYSVKKGTTGCT) constitute an EGF-like 21; calcium-binding domain. Ser-1347 carries O-linked (Glc) serine glycosylation. Residues 1367 to 1407 (DVDECEIGAHNCDMHASCLNIPGSFKCSCREGWIGNGIKCI) enclose the EGF-like 22; calcium-binding domain. O-linked (Glc) serine glycosylation occurs at Ser-1390. Residues 1408-1448 (DLDECSNGTHQCSINAQCVNTPGSYRCACSEGFTGDGFTCS) form the EGF-like 23; calcium-binding domain. A glycan (N-linked (GlcNAc...) asparagine) is linked at Asn-1414. The region spanning 1449 to 1490 (DVDECAENINLCENGQCLNVPGAYRCECEMGFTPASDSRSCQ) is the EGF-like 24; calcium-binding domain. The 41-residue stretch at 1491-1531 (DIDECSFQNICVFGTCNNLPGMFHCICDDGYELDRTGGNCT) folds into the EGF-like 25; calcium-binding domain. Asn-1529 carries an N-linked (GlcNAc...) asparagine glycan. One can recognise an EGF-like 26; calcium-binding domain in the interval 1532–1572 (DIDECADPINCVNGLCVNTPGRYECNCPPDFQLNPTGVGCV). Residues 1577-1633 (GNCYLKFGPRGDGSLSCNTEIGVGVSRSSCCCSLGKAWGNPCETCPPVNSTEYYTLC) form the TB 6 domain. A glycan (N-linked (GlcNAc...) asparagine) is linked at Asn-1625. The EGF-like 27; calcium-binding domain maps to 1650–1691 (DIDECQELPGLCQGGNCINTFGSFQCECPQGYYLSEDTRICE). Cystine bridges form between Cys-1654-Cys-1666, Cys-1661-Cys-1675, Cys-1677-Cys-1690, Cys-1696-Cys-1708, Cys-1703-Cys-1717, and Cys-1719-Cys-1732. Ser-1672 is a glycosylation site (O-linked (Glc) serine). The 42-residue stretch at 1692–1733 (DIDECFAHPGVCGPGTCYNTLGNYTCICPPEYMQVNGGHNCM) folds into the EGF-like 28; calcium-binding domain. Asn-1714 carries N-linked (GlcNAc...) asparagine glycosylation. Positions 1735-2171 (MRKSFCYRSY…VPSLHDTRED (437 aa)) are interaction with MFAP4. In terms of domain architecture, TB 7 spans 1738-1791 (SFCYRSYNGTTCENELPFNVTKRMCCCTYNVGKAWNKPCEPCPTPGTADFKTIC). 2 N-linked (GlcNAc...) asparagine glycosylation sites follow: Asn-1745 and Asn-1756. The region spanning 1808–1849 (DIDECKEIPGICANGVCINQIGSFRCECPTGFSYNDLLLVCE) is the EGF-like 29; calcium-binding domain. Intrachain disulfides connect Cys-1812/Cys-1824, Cys-1819/Cys-1833, Cys-1835/Cys-1848, Cys-1854/Cys-1867, Cys-1861/Cys-1876, Cys-1878/Cys-1890, Cys-1896/Cys-1908, Cys-1903/Cys-1917, Cys-1919/Cys-1932, Cys-1938/Cys-1948, Cys-1943/Cys-1957, Cys-1959/Cys-1971, Cys-1977/Cys-1990, Cys-1985/Cys-1999, Cys-2001/Cys-2014, Cys-2020/Cys-2032, Cys-2027/Cys-2041, Cys-2043/Cys-2054, Cys-2060/Cys-2072, Cys-2067/Cys-2081, and Cys-2083/Cys-2096. One can recognise an EGF-like 30; calcium-binding domain in the interval 1850 to 1891 (DIDECSNGDNLCQRNADCINSPGSYRCECAAGFKLSPNGACV). An O-linked (Glc) serine glycan is attached at Ser-1873. In terms of domain architecture, EGF-like 31; calcium-binding spans 1892 to 1933 (DRNECLEIPNVCSHGLCVDLQGSYQCICHNGFKASQDQTMCM). An EGF-like 32; calcium-binding domain is found at 1934-1972 (DVDECERHPCGNGTCKNTVGSYNCLCYPGFELTHNNDCL). A glycan (N-linked (GlcNAc...) asparagine) is linked at Asn-1945. Residue Ser-1954 is glycosylated (O-linked (Glc) serine). An EGF-like 33; calcium-binding domain is found at 1973-2015 (DIDECSSFFGQVCRNGRCFNEIGSFKCLCNEGYELTPDGKNCI). Ser-1996 carries an O-linked (Glc) serine glycan. The region spanning 2016 to 2055 (DTNECVALPGSCSPGTCQNLEGSFRCICPPGYEVKSENCI) is the EGF-like 34; calcium-binding domain. Residues 2056-2097 (DINECDEDPNICLFGSCTNTPGGFQCLCPPGFVLSDNGRRCF) form the EGF-like 35; calcium-binding domain. Positions 2102–2155 (SFCFTNFENGKCSVPKAFNTTKAKCCCSKMPGEGWGDPCELCPKDDEVAFQDLC) constitute a TB 8 domain. Residue Asn-2120 is glycosylated (N-linked (GlcNAc...) asparagine). The region spanning 2171 to 2212 (DVNECLESPGICSNGQCINTDGSFRCECPMGYNLDYTGVRCV) is the EGF-like 36; calcium-binding domain. Disulfide bonds link Cys-2175–Cys-2187, Cys-2182–Cys-2196, Cys-2198–Cys-2211, Cys-2217–Cys-2228, Cys-2223–Cys-2237, Cys-2239–Cys-2251, Cys-2257–Cys-2268, Cys-2264–Cys-2277, Cys-2279–Cys-2292, Cys-2298–Cys-2312, Cys-2305–Cys-2321, Cys-2323–Cys-2336, Cys-2342–Cys-2354, Cys-2349–Cys-2363, and Cys-2365–Cys-2378. O-linked (Glc) serine glycosylation is present at Ser-2193. Residues 2213–2252 (DTDECSIGNPCGNGTCTNVIGSFECNCNEGFEPGPMMNCE) form the EGF-like 37; calcium-binding domain. N-linked (GlcNAc...) asparagine glycosylation is present at Asn-2225. The EGF-like 38; calcium-binding domain maps to 2253-2293 (DINECAQNPLLCAFRCMNTFGSYECTCPIGYALREDQKMCK). Ser-2274 carries an O-linked (Glc) serine glycan. In terms of domain architecture, EGF-like 39; calcium-binding spans 2294–2337 (DLDECAEGLHDCESRGMMCKNLIGTFMCICPPGMARRPDGEGCV). The 42-residue stretch at 2338-2379 (DENECRTKPGICENGRCVNIIGSYRCECNEGFQSSSSGTECL) folds into the EGF-like 40; calcium-binding domain. O-linked (Glc) serine glycosylation occurs at Ser-2360. A TB 9 domain is found at 2384–2437 (GLCFAEVLQTICQMASSSRNLVTKSECCCDGGRGWGHQCELCPLPGTAQYKKIC). The EGF-like 41; calcium-binding domain occupies 2449-2490 (DIDECKVMPNLCTNGQCINTMGSFRCFCKVGYTTDISGTSCI). 21 disulfides stabilise this stretch: Cys-2453-Cys-2465, Cys-2460-Cys-2474, Cys-2476-Cys-2489, Cys-2495-Cys-2506, Cys-2502-Cys-2515, Cys-2517-Cys-2530, Cys-2536-Cys-2547, Cys-2543-Cys-2556, Cys-2558-Cys-2569, Cys-2575-Cys-2588, Cys-2582-Cys-2597, Cys-2599-Cys-2612, Cys-2618-Cys-2628, Cys-2624-Cys-2637, Cys-2639-Cys-2652, Cys-2658-Cys-2669, Cys-2664-Cys-2678, Cys-2680-Cys-2693, Cys-2699-Cys-2710, Cys-2706-Cys-2719, and Cys-2721-Cys-2733. The O-linked (Glc) serine glycan is linked to Ser-2471. One can recognise an EGF-like 42; calcium-binding domain in the interval 2491–2531 (DLDECSQSPKPCNYICKNTEGSYQCSCPRGYVLQEDGKTCK). Ser-2512 carries an O-linked (Glc) serine glycan. Residues 2532–2570 (DLDECQTKQHNCQFLCVNTLGGFTCKCPPGFTQHHTACI) form the EGF-like 43; calcium-binding domain. In terms of domain architecture, EGF-like 44; calcium-binding spans 2571 to 2613 (DNNECGSQPSLCGAKGICQNTPGSFSCECQRGFSLDATGLNCE). An O-linked (Glc) serine glycan is attached at Ser-2594. The EGF-like 45; calcium-binding domain occupies 2614–2653 (DVDECDGNHRCQHGCQNILGGYRCGCPQGYIQHYQWNQCV). Positions 2654-2694 (DENECSNPNACGSASCYNTLGSYKCACPSGFSFDQFSSACH) constitute an EGF-like 46; calcium-binding domain. O-linked (Glc) serine glycosylation is present at Ser-2675. In terms of domain architecture, EGF-like 47; calcium-binding spans 2695 to 2734 (DVNECSSSKNPCNYGCSNTEGGYLCGCPPGYYRVGQGHCV). The N-linked (GlcNAc...) asparagine glycan is linked to Asn-2808.

The protein belongs to the fibrillin family. Interacts with BMP2, BMP4, BMP7, BMP10 and GDF5. Interacts with MFAP2 and MFAP5. Interacts with ADAMTSL5. Interacts with MFAP4. Post-translationally, N-glycosylated. In terms of processing, O-glycosylated on serine residues by POGLUT2 and POGLUT3. Almost exclusively expressed in placenta. Expressed at much lower level in other tissues. Expressed in fetal eye (18 weeks)in the retinal pigment epithelium (RPE), the choroid, Bruch's membrane and in the sclera. Not expressed in the neural retina. As to expression, present at high level in cytotrophoblasts as compared with syncytiotrophoblasts at 8-9 weeks of pregnancy (at protein level). Levels in the serum increase during pregnancy (at protein level).

The protein resides in the secreted. It is found in the extracellular space. It localises to the extracellular matrix. Its function is as follows. Fibrillins are structural components of 10-12 nm extracellular calcium-binding microfibrils, which occur either in association with elastin or in elastin-free bundles. Fibrillin-2-containing microfibrils regulate the early process of elastic fiber assembly. Regulates osteoblast maturation by controlling TGF-beta bioavailability and calibrating TGF-beta and BMP levels, respectively. Hormone secreted by trophoblasts that promotes trophoblast invasiveness. Has glucogenic activity: is able to increase plasma glucose levels. In Homo sapiens (Human), this protein is Fibrillin-2.